The chain runs to 631 residues: Altered inheritance of mitochondria protein 9, mitochondrial (631 aa).

Residues 1 to 41 (MLSRVVRQRSRSAISSFKLRAHAAFAETRIGVGISVQATRL) constitute a mitochondrion transit peptide.

It belongs to the AIM9 family.

Its subcellular location is the mitochondrion. This Scheffersomyces stipitis (strain ATCC 58785 / CBS 6054 / NBRC 10063 / NRRL Y-11545) (Yeast) protein is Altered inheritance of mitochondria protein 9, mitochondrial (AIM9).